A 1726-amino-acid polypeptide reads, in one-letter code: MGHTHSRQLFVHMLSVMLKHRGITVSKTKLINFLSFIEEVCPWFPREGTVNLETWKKVGEQIRTHYTLHGPEKVPVETLSFWTLIRDCLDFDNDELKRLGNLLKQEEDPLHTPDSVPSYDPPPPPPPSLKMHPSDNDDSLSSTDEAELDEEAAKYHQEDWGFLAQEKGALTSKDELVECFKNLTIALQNAGIQLPSNNNTFPSAPPFPPAYTPTVMAGLDPPPGFPPPSKHMSPLQKALRQAQRLGEVVSDFSLAFPVFENNNQRYYESLPFKQLKELKIACSQYGPTAPFTIAMIESLGTQALPPNDWKQTARACLSGGDYLLWKSEFFEQCARIADVNRQQGIQTSYEMLIGEGPYQATDTQLNFLPGAYAQISNAARQAWKKLPSSSTKTEDLSKVRQGPDEPYQDFVARLLDTIGKIMSDEKAGMVLAKQLAFENANSACQAALRPYRKKGDLSDFIRICADIGPSYMQGIAMAAALQGKSIKEVLFQQQARNKKGLQKSGNSGCFVCGQPGHRAAVCPQKHQTSVNTPNLCPRCKKGKHWARDCRSKTDVQGNPLPPVSGNLGEGPAPGPETMLWGNTAGSKRTIADLCRATRGSAGLDLCATSYTVLTPEMGVQTLATGVFGPLPPGTVGLLLGRSSASLKGILIHPGVIDSDYTGEIKILASAPNKIIVINAGQRIAQLLLVPLVIQGKTINRDRQDKGFGSSDAYWVQNVTEARPELELRINANFFRGVLDTGADISVISDKYWPTTWPKQMAISTLQGIGQTTNPEQSSSLLTWKDKDGHTGQFKPYILPYLPVNLWGRDILSKMGVYLYSPSPTVTDLMLDQGLLPNQGLGKQHQGIILPLDLKPNQDRKGLGCFPLGTSDSPVTHADPIDWKSEEPVWVDQWPLTQEKLSAAQQLVQEQLRLGHIEPSTSAWNSPIFVIKKKSGKWRLLQDLRKVNETMMHMGALQPGLPTPSAIPDKSYIIVIDLKDCFYTIPLAPQDCKRFAFSLPSVNFKEPMQRYQWRVLPQGMTNSPTLCQKFVATAIAPVRQRFPQLYLVHYMDDILLAHTDEHLLYQAFSILKQHLSLNGLVIADEKIQTHFPYNYLGFSLYPRVYNTQLVKLQTDHLKTLNDFQKLLGDINWIRPYLKLPTYTLQPLFDILKGDSDPASPRTLSLEGRTALQSIEEAIRQQQITYCDYQRSWGLYILPTPRAPTGVLYQDKPLRWIYLSATPTKHLLPYYELVAKIIAKGRHEAIQYFGMEPPFICVPYALEQQDWLFQFSDNWSIAFANYPGQITHHYPSDKLLQFASSHAFIFPKIVRRQPIPEATLIFTDGSSNGTAALIINHQTYYAQTSFSSAQVVELFAVHQALLTVPTSFNLFTDSSYVVGALQMIETVPIIGTTSPEVLNLFTLIQQVLHCRQHPCFFGHIRAHSTLPGALVQGNHTADVLTKQVFFQSAIDAARKSHDLHHQNSHSLRLQFKISREAARQIVKSCSTCPQFFVLPQYGVNPRGLRPNHLWQTDVTHIPQFGRLKYVHVSIDTFSNFLMASLHTGESTRHCIQHLLFCFSTSGIPQTLKTDNGPGYTSRSFQRFCLSFQIHHKTGIPYNPQGQGIVERAHQRIKHQLLKQKKGNELYSPSPHNALNHALYVLNFLTLDTEGNSAAQRFWGERSSCKKPLVRWKDPLTNLWYGPDPVLIWGRGHVCVFPQDAEAPRWIPERLVRAAEELPDASDATHDPE.

The N-myristoyl glycine; by host moiety is linked to residue Gly2. The segment at 103-148 is disordered; it reads LKQEEDPLHTPDSVPSYDPPPPPPPSLKMHPSDNDDSLSSTDEAEL. A compositionally biased stretch (pro residues) spans 119-128; sequence YDPPPPPPPS. The short motif at 202–205 is the PTAP/PSAP motif element; that stretch reads PSAP. The short motif at 208–211 is the PPXY motif element; sequence PPAY. The PTAP/PSAP motif signature appears at 287-290; that stretch reads PTAP. Residues 507-524 form a CCHC-type zinc finger; that stretch reads SGCFVCGQPGHRAAVCPQ. Residues 550 to 570 are disordered; it reads RSKTDVQGNPLPPVSGNLGEG. One can recognise a Peptidase A2 domain in the interval 734-810; it reads FRGVLDTGAD…LPVNLWGRDI (77 aa). Catalysis depends on Asp739, which acts as the Protease; shared with dimeric partner. Residues 821-866 form the G-patch domain; sequence PSPTVTDLMLDQGLLPNQGLGKQHQGIILPLDLKPNQDRKGLGCFP. In terms of domain architecture, Reverse transcriptase spans 911–1099; sequence LRLGHIEPST…FPYNYLGFSL (189 aa). The Mg(2+) site is built by Asp976, Asp1051, Asp1052, Asp1322, Glu1351, Asp1371, and Asp1436. In terms of domain architecture, RNase H type-1 spans 1313 to 1444; sequence IPEATLIFTD…ADVLTKQVFF (132 aa). An Integrase-type zinc finger spans residues 1446–1487; it reads SAIDAARKSHDLHHQNSHSLRLQFKISREAARQIVKSCSTCP. Residues His1455, His1459, Cys1483, and Cys1486 each coordinate Zn(2+). Residues 1500-1659 form the Integrase catalytic domain; the sequence is RGLRPNHLWQ…SAAQRFWGER (160 aa). Positions 1511, 1568, and 1604 each coordinate Mg(2+). Positions 1665–1714 form a DNA-binding region, integrase-type; that stretch reads PLVRWKDPLTNLWYGPDPVLIWGRGHVCVFPQDAEAPRWIPERLVRAAEE.

Belongs to the retroviral Pol polyprotein family. In terms of assembly, homodimer. Interacts with the G-patch peptide. As to quaternary structure, interacts with the reverse transcriptase/ribonuclease H. In terms of assembly, homotrimer. Mg(2+) is required as a cofactor. Post-translationally, released by autocatalytic processing. The protease can undergo further autoprocessing to yield 2 shorter but enzymatically active forms of 12 kDa and 13 kDa. Myristoylated. Myristoylation of the matrix (MA) domain mediates the transport and binding of Gag polyproteins to the host plasma membrane and is required for the assembly of viral particles. In terms of processing, specific enzymatic cleavages in vivo yield mature proteins.

It localises to the virion. The catalysed reaction is DNA(n) + a 2'-deoxyribonucleoside 5'-triphosphate = DNA(n+1) + diphosphate. The enzyme catalyses Endonucleolytic cleavage to 5'-phosphomonoester.. It catalyses the reaction dUTP + H2O = dUMP + diphosphate + H(+). Its function is as follows. Matrix protein. Nucleocapsid protein p14: Nucleocapsid protein. In terms of biological role, capsid protein. Functionally, the aspartyl protease mediates proteolytic cleavages of Gag and Gag-Pol polyproteins during or shortly after the release of the virion from the plasma membrane. Cleavages take place as an ordered, step-wise cascade to yield mature proteins. This process is called maturation. Displays maximal activity during the budding process just prior to particle release from the cell. Its function is as follows. Enhances the activity of the reverse transcriptase. May be part of the mature RT. RT is a multifunctional enzyme that converts the viral dimeric RNA genome into dsDNA in the cytoplasm, shortly after virus entry into the cell. This enzyme displays a DNA polymerase activity that can copy either DNA or RNA templates, and a ribonuclease H (RNase H) activity that cleaves the RNA strand of RNA-DNA heteroduplexes in a partially processive 3' to 5' endonucleasic mode. Conversion of viral genomic RNA into dsDNA requires many steps. A tRNA binds to the primer-binding site (PBS) situated at the 5' end of the viral RNA. RT uses the 3' end of the tRNA primer to perfom a short round of RNA-dependent minus-strand DNA synthesis. The reading proceeds through the U5 region and ends after the repeated (R) region which is present at both ends of viral RNA. The portion of the RNA-DNA heteroduplex is digested by the RNase H, resulting in a ssDNA product attached to the tRNA primer. This ssDNA/tRNA hybridizes with the identical R region situated at the 3' end of viral RNA. This template exchange, known as minus-strand DNA strong stop transfer, can be either intra- or intermolecular. RT uses the 3' end of this newly synthesized short ssDNA to perfom the RNA-dependent minus-strand DNA synthesis of the whole template. RNase H digests the RNA template except for a polypurine tract (PPT) situated at the 5' end of the genome. It is not clear if both polymerase and RNase H activities are simultaneous. RNase H probably can proceed both in a polymerase-dependent (RNA cut into small fragments by the same RT performing DNA synthesis) and a polymerase-independent mode (cleavage of remaining RNA fragments by free RTs). Secondly, RT performs DNA-directed plus-strand DNA synthesis using the PPT that has not been removed by RNase H as primers. PPT and tRNA primers are then removed by RNase H. The 3' and 5' ssDNA PBS regions hybridize to form a circular dsDNA intermediate. Strand displacement synthesis by RT to the PBS and PPT ends produces a blunt ended, linear dsDNA copy of the viral genome that includes long terminal repeats (LTRs) at both ends. In terms of biological role, catalyzes viral DNA integration into the host chromosome, by performing a series of DNA cutting and joining reactions. This Ovis aries (Sheep) protein is Gag-Pro-Pol polyprotein (pol).